Here is a 682-residue protein sequence, read N- to C-terminus: Nisin leader peptide-processing serine protease NisP (682 aa).

An N-terminal signal peptide occupies residues 1 to 22; it reads MKKILGFLFIVCSLGLSATVHG. A propeptide spanning residues 23–195 is cleaved from the precursor; it reads ETTNSQQLLS…RKAKEVVSLR (173 aa). A Peptidase S8 domain is found at 231-566; sequence QWDMKYVTNN…VDLLNGKNKA (336 aa). Catalysis depends on charge relay system residues Asp-259, His-306, and Ser-512. Residues 652–656 carry the LPXTG sorting signal motif; that stretch reads LPVTG. Residue Thr-655 is modified to Pentaglycyl murein peptidoglycan amidated threonine. A propeptide spans 656–682 (removed by sortase); it reads GDGEDFLPALGIVCISILGILKRKTKN.

The protein belongs to the peptidase S8 family.

The protein resides in the secreted. It localises to the cell wall. It functions in the pathway antibiotic biosynthesis; nisin biosynthesis. Cleaves the lantibiotic nisin precursor peptide. The sequence is that of Nisin leader peptide-processing serine protease NisP (nisP) from Lactococcus lactis subsp. lactis (Streptococcus lactis).